The chain runs to 148 residues: Receptor activity-modifying protein 3 (148 aa).

Positions 1–23 are cleaved as a signal peptide; sequence METGALRRPQLLPLLLLLCGGCP. The Extracellular segment spans residues 24–113; that stretch reads RAGGCNETGM…CTVDRVHLED (90 aa). N-linked (GlcNAc...) asparagine glycosylation is found at N29, N58, N71, and N103. Disulfide bonds link C40–C72 and C57–C104. The chain crosses the membrane as a helical span at residues 114 to 138; sequence PPDEVLIPLIVIPVVLTVAMAGLVV. Over 139–148 the chain is Cytoplasmic; that stretch reads WRSKRTDTLL.

Belongs to the RAMP family. Heterodimer of CALCRL and RAMP3; interaction induces allosteric modulation of CALCRL function and ligand specificity for adrenomedullin/ADM and intermedin/ADM2. Heterodimer of CALCR and RAMP3; interaction form the receptor complex AMYR3 for amylin/IAPP. Interacts with GPER1. As to expression, strongly expressed in lung, breast, immune system and fetal tissues.

The protein resides in the cell membrane. Its subcellular location is the membrane. Its function is as follows. Accessory protein that interacts with and modulates the function of G-protein coupled receptors including calcitonin gene-related peptide type 1 receptor (CALCRL), calcitonin receptor (CALCR) and G-protein coupled estrogen receptor 1 (GPER1). Required for the transport of CALCRL and GPER1 receptors to the plasma membrane. Plays a role in cardioprotection by reducing cardiac hypertrophy and perivascular fibrosis in a GPER1-dependent manner. Together with CALCRL, form a receptor complex for adrenomedullin/ADM and intermedin/ADM2. Together with CALCR, act as a receptor complex for amylin/IAPP. This chain is Receptor activity-modifying protein 3, found in Homo sapiens (Human).